The sequence spans 280 residues: Large ribosomal subunit protein uL2 (280 aa).

2 disordered regions span residues 1-58 and 226-280; these read MAIR…GGGH and MNPV…KHGR. 2 stretches are compositionally biased toward basic residues: residues 37 to 58 and 268 to 280; these read LHGHGGRNAHGRITTRHKGGGH and IVRRRRTGKKHGR.

This sequence belongs to the universal ribosomal protein uL2 family. In terms of assembly, part of the 50S ribosomal subunit. Forms a bridge to the 30S subunit in the 70S ribosome.

One of the primary rRNA binding proteins. Required for association of the 30S and 50S subunits to form the 70S ribosome, for tRNA binding and peptide bond formation. It has been suggested to have peptidyltransferase activity; this is somewhat controversial. Makes several contacts with the 16S rRNA in the 70S ribosome. The polypeptide is Large ribosomal subunit protein uL2 (Mycolicibacterium paratuberculosis (strain ATCC BAA-968 / K-10) (Mycobacterium paratuberculosis)).